The sequence spans 755 residues: Atypical kinase coq-8, mitochondrial (755 aa).

The tract at residues 57-78 (QDVDPLKEPNKTNAPLLSPTLP) is disordered. The span at 67–78 (KTNAPLLSPTLP) shows a compositional bias: polar residues. ATP contacts are provided by residues 435 to 443 (FACASIGQV) and Lys-457. Asp-587 (proton acceptor) is an active-site residue.

It belongs to the protein kinase superfamily. ADCK protein kinase family.

It localises to the mitochondrion. The protein operates within cofactor biosynthesis; ubiquinone biosynthesis. In terms of biological role, atypical kinase involved in the biosynthesis of coenzyme Q, also named ubiquinone, an essential lipid-soluble electron transporter for aerobic cellular respiration. Its substrate specificity is still unclear: may act as a protein kinase that mediates phosphorylation of coq-3. According to other reports, acts as a small molecule kinase, possibly a lipid kinase that phosphorylates a prenyl lipid in the ubiquinone biosynthesis pathway, as suggested by its ability to bind coenzyme Q lipid intermediates. This Caenorhabditis elegans protein is Atypical kinase coq-8, mitochondrial (coq-8).